The primary structure comprises 152 residues: Large ribosomal subunit protein uL22 (152 aa).

The protein belongs to the universal ribosomal protein uL22 family. As to quaternary structure, part of the 50S ribosomal subunit.

Functionally, this protein binds specifically to 23S rRNA. It makes multiple contacts with different domains of the 23S rRNA in the assembled 50S subunit and ribosome. In terms of biological role, the globular domain of the protein is located near the polypeptide exit tunnel on the outside of the subunit, while an extended beta-hairpin is found that lines the wall of the exit tunnel in the center of the 70S ribosome. The chain is Large ribosomal subunit protein uL22 from Methanothrix thermoacetophila (strain DSM 6194 / JCM 14653 / NBRC 101360 / PT) (Methanosaeta thermophila).